The chain runs to 268 residues: Shikimate dehydrogenase (NADP(+)) (268 aa).

Shikimate contacts are provided by residues 15–17 (SKS) and T60. K64 (proton acceptor) is an active-site residue. Shikimate-binding residues include N85 and D101. Residues 121–125 (GAGGS) and L208 contribute to the NADP(+) site. Shikimate is bound at residue Y210. G230 is a binding site for NADP(+).

It belongs to the shikimate dehydrogenase family. In terms of assembly, homodimer.

It catalyses the reaction shikimate + NADP(+) = 3-dehydroshikimate + NADPH + H(+). It participates in metabolic intermediate biosynthesis; chorismate biosynthesis; chorismate from D-erythrose 4-phosphate and phosphoenolpyruvate: step 4/7. Functionally, involved in the biosynthesis of the chorismate, which leads to the biosynthesis of aromatic amino acids. Catalyzes the reversible NADPH linked reduction of 3-dehydroshikimate (DHSA) to yield shikimate (SA). This Helicobacter hepaticus (strain ATCC 51449 / 3B1) protein is Shikimate dehydrogenase (NADP(+)).